The following is a 259-amino-acid chain: MNVLQTTNLSKTYYSNKGTISYQALSAFDLSVSKGEFVGIMGPSGSGKTTLLNLLATIDKPTQGEMMINGIQPKTLKDQELALFRRRELGFVFQDFNLLDTLTIRENILLPLALDKVKLREMEARLDELADTLQIKHILDHRTYEVSGGQQQRAACARAIIHNPALILADEPTGNLDSKSAKQVMNTLAQLNEEKEATILLVTHDATAASFCKRIVFIKDGRFFSEIHRGTNRQVFYQSILDTLSVLGGDFHEFENYRP.

The 245-residue stretch at 4–248 (LQTTNLSKTY…SILDTLSVLG (245 aa)) folds into the ABC transporter domain. 42–49 (GPSGSGKT) serves as a coordination point for ATP.

The protein belongs to the ABC transporter superfamily.

This is an uncharacterized protein from Bacillus subtilis (strain 168).